The sequence spans 776 residues: MRILVTAALPYSNGPIHLGHIAGAYLPADIFYRFVKLKGYNALYICGSDQYGSPIELNAIKLNIDPKDYASFYRKIQEEIFKKFNIKFDIYSGTAESNIHPIIVKEFFLSLFSAGLLIEKEQELPYDPKIKRFLPDRFVVGQCPYCGYEKAYGDQCEKCGRLLEPKELINPKSAITGEKVIFKKTRHLFFNIPKLKDKLKQYIESKKDVWNDFTYSWSLALLDNFKERAITRDNKWGVKVPAKEMLEILKKALKEGKTPKDFGLLIDSTNEKDLENHIKEYENKVLYVWFDAPIGYISFTFETSPEYRYYWDEKEKPYIVHFIGKDNIPFHTIFWPALIIGRNLGYKNINHILDFDIALPYQVFGNPYLNYYGKKFSKSKRWGVFLDNIDKIDIDIDYFRFYLAYIHTVSKDMSFEWDQFKEVINKELVDNIGNFIHRVLTFIYNRFNGIPPKIEHLDDKDKELLDKIKQLPEKVFNFIWKGEIGNALREIVNTSNLANKYFQEKEPWKTNDPNTIAIAFEAVKTFIILLYPFIPEKAKLLASIANIDIKWDFNQKVEKINKPFIVFHKLSDNQIEMAKQILTNPKEYDLGKKKVIGVLRYEDELYKIELECDDNPWVCLKRELDKRKIKYIYDTVKGDVPPHIIDGNTYIYLLPALEKPNLEKAEEEYGLVSYLDFAKLDMRVGKIIDVQDHPNADKLYIIKVSLGNKQKTLVGGLKQYYKKEELIGKYVVLINNLKPKQLRGITSEGMLLAADDGKEVALLMPDKPISLGSKVR.

A 'HIGH' region motif is present at residues 10–20; that stretch reads PYSNGPIHLGH. Positions 143, 146, 156, and 159 each coordinate Zn(2+). A 'KMSKS' region motif is present at residues 375–379; that stretch reads KFSKS. K378 lines the ATP pocket. In terms of domain architecture, tRNA-binding spans 676–776; sequence DFAKLDMRVG…KPISLGSKVR (101 aa).

It belongs to the class-I aminoacyl-tRNA synthetase family. MetG type 1 subfamily. As to quaternary structure, homodimer. It depends on Zn(2+) as a cofactor.

It is found in the cytoplasm. It carries out the reaction tRNA(Met) + L-methionine + ATP = L-methionyl-tRNA(Met) + AMP + diphosphate. In terms of biological role, is required not only for elongation of protein synthesis but also for the initiation of all mRNA translation through initiator tRNA(fMet) aminoacylation. The polypeptide is Methionine--tRNA ligase (metG) (Nanoarchaeum equitans (strain Kin4-M)).